We begin with the raw amino-acid sequence, 300 residues long: Acetyl-coenzyme A carboxylase carboxyl transferase subunit beta (300 aa).

The CoA carboxyltransferase N-terminal domain maps to 24 to 293 (LWTNCESCSQ…NAPGAALGGA (270 aa)). Positions 28, 31, 47, and 50 each coordinate Zn(2+). The C4-type zinc finger occupies 28–50 (CESCSQMILVKDLQKAMNVCPHC).

Belongs to the AccD/PCCB family. In terms of assembly, acetyl-CoA carboxylase is a heterohexamer composed of biotin carboxyl carrier protein (AccB), biotin carboxylase (AccC) and two subunits each of ACCase subunit alpha (AccA) and ACCase subunit beta (AccD). Zn(2+) serves as cofactor.

The protein localises to the cytoplasm. It catalyses the reaction N(6)-carboxybiotinyl-L-lysyl-[protein] + acetyl-CoA = N(6)-biotinyl-L-lysyl-[protein] + malonyl-CoA. Its pathway is lipid metabolism; malonyl-CoA biosynthesis; malonyl-CoA from acetyl-CoA: step 1/1. Functionally, component of the acetyl coenzyme A carboxylase (ACC) complex. Biotin carboxylase (BC) catalyzes the carboxylation of biotin on its carrier protein (BCCP) and then the CO(2) group is transferred by the transcarboxylase to acetyl-CoA to form malonyl-CoA. The chain is Acetyl-coenzyme A carboxylase carboxyl transferase subunit beta from Gluconacetobacter diazotrophicus (strain ATCC 49037 / DSM 5601 / CCUG 37298 / CIP 103539 / LMG 7603 / PAl5).